The primary structure comprises 432 residues: MAHLKFTLTKKLALLIMVAAIVSGVIFLTLQKITDDLIEGYLSSEEYYHEESARYIQKFSKYVSENELSTSDRKAFGEWVKKENYINLTIFKDQELQYDSIYSESDYGKEKLTQYAQNHSHPVKFSDGEGRVIIDGFYSSRYYDLAFALDLLGATLIFLIIVLFGIRQSLRYLKTIHQEIHILEGGELDYEMTIKGHDELAMIAKSIEDLRKAFLDKLKAIEELQAESRSLVTEMSHDMRTPLTSLIMNLEFAKKEGGEAGASKDRYVANAYGKALQLKSLSDNLFAYFLLNKEYEADLETVAVKEVIYDLISDQIAILHQEHFRVHISGELPETYINVNLEELGRVFDNVMSNLLKYADPEEKISITFVSDQEIFEIHVSNTIKLADITPESNGLGERSIARMMSRMQGQFHSIQKNSKYYIVLRFWNTKM.

At 1 to 12 (MAHLKFTLTKKL) the chain is on the cytoplasmic side. The helical transmembrane segment at 13–33 (ALLIMVAAIVSGVIFLTLQKI) threads the bilayer. Over 34–145 (TDDLIEGYLS…GFYSSRYYDL (112 aa)) the chain is Extracellular. Residues 146 to 166 (AFALDLLGATLIFLIIVLFGI) form a helical membrane-spanning segment. The HAMP domain maps to 167–219 (RQSLRYLKTIHQEIHILEGGELDYEMTIKGHDELAMIAKSIEDLRKAFLDKLK). Topologically, residues 167 to 432 (RQSLRYLKTI…IVLRFWNTKM (266 aa)) are cytoplasmic. The region spanning 234–432 (EMSHDMRTPL…IVLRFWNTKM (199 aa)) is the Histidine kinase domain. Position 237 is a phosphohistidine; by autocatalysis (His237).

It localises to the cell membrane. It catalyses the reaction ATP + protein L-histidine = ADP + protein N-phospho-L-histidine.. Functionally, member of the two-component regulatory system YrkQ/YrkP. Probably activates YrkP by phosphorylation. The protein is Sensor histidine kinase YrkQ (yrkQ) of Bacillus subtilis (strain 168).